The primary structure comprises 246 residues: Ribonuclease 3 (246 aa).

Positions 10-143 (LERLEQALDY…LLGAIYLDGG (134 aa)) constitute an RNase III domain. Glutamate 56 is a binding site for Mg(2+). Aspartate 60 is a catalytic residue. Mg(2+)-binding residues include asparagine 129 and glutamate 132. Glutamate 132 is an active-site residue. In terms of domain architecture, DRBM spans 170–239 (DYKTLLQEYL…AQQALELLIE (70 aa)).

It belongs to the ribonuclease III family. Homodimer. Requires Mg(2+) as cofactor.

It is found in the cytoplasm. It catalyses the reaction Endonucleolytic cleavage to 5'-phosphomonoester.. In terms of biological role, digests double-stranded RNA. Involved in the processing of primary rRNA transcript to yield the immediate precursors to the large and small rRNAs (23S and 16S). Processes some mRNAs, and tRNAs when they are encoded in the rRNA operon. Processes pre-crRNA and tracrRNA of type II CRISPR loci if present in the organism. The chain is Ribonuclease 3 from Magnetococcus marinus (strain ATCC BAA-1437 / JCM 17883 / MC-1).